Consider the following 312-residue polypeptide: Lipoyl synthase (312 aa).

The segment covering 1–10 (MNEAPAEKQK) has biased composition (basic and acidic residues). The interval 1 to 20 (MNEAPAEKQKPQQGKRFSER) is disordered. Positions 51, 56, 62, 77, 81, 84, and 290 each coordinate [4Fe-4S] cluster. Positions 63 to 280 (WSRKTATYLA…RSVGESLGLF (218 aa)) constitute a Radical SAM core domain.

Belongs to the radical SAM superfamily. Lipoyl synthase family. The cofactor is [4Fe-4S] cluster.

The protein localises to the cytoplasm. It catalyses the reaction [[Fe-S] cluster scaffold protein carrying a second [4Fe-4S](2+) cluster] + N(6)-octanoyl-L-lysyl-[protein] + 2 oxidized [2Fe-2S]-[ferredoxin] + 2 S-adenosyl-L-methionine + 4 H(+) = [[Fe-S] cluster scaffold protein] + N(6)-[(R)-dihydrolipoyl]-L-lysyl-[protein] + 4 Fe(3+) + 2 hydrogen sulfide + 2 5'-deoxyadenosine + 2 L-methionine + 2 reduced [2Fe-2S]-[ferredoxin]. Its pathway is protein modification; protein lipoylation via endogenous pathway; protein N(6)-(lipoyl)lysine from octanoyl-[acyl-carrier-protein]: step 2/2. Functionally, catalyzes the radical-mediated insertion of two sulfur atoms into the C-6 and C-8 positions of the octanoyl moiety bound to the lipoyl domains of lipoate-dependent enzymes, thereby converting the octanoylated domains into lipoylated derivatives. This Chlamydia felis (strain Fe/C-56) (Chlamydophila felis) protein is Lipoyl synthase.